The primary structure comprises 283 residues: Polyamine aminopropyltransferase (283 aa).

The region spanning 5–238 is the PABS domain; it reads TTWIDEYQKG…GIWSWTFASK (234 aa). Glutamine 32 lines the S-methyl-5'-thioadenosine pocket. Spermidine is bound by residues histidine 63 and aspartate 87. S-methyl-5'-thioadenosine-binding positions include glutamate 107 and 139-140; that span reads DG. Aspartate 158 serves as the catalytic Proton acceptor. 158-161 provides a ligand contact to spermidine; sequence DCSD.

It belongs to the spermidine/spermine synthase family. In terms of assembly, homodimer or homotetramer.

The protein resides in the cytoplasm. The enzyme catalyses S-adenosyl 3-(methylsulfanyl)propylamine + putrescine = S-methyl-5'-thioadenosine + spermidine + H(+). It participates in amine and polyamine biosynthesis; spermidine biosynthesis; spermidine from putrescine: step 1/1. Functionally, catalyzes the irreversible transfer of a propylamine group from the amino donor S-adenosylmethioninamine (decarboxy-AdoMet) to putrescine (1,4-diaminobutane) to yield spermidine. In Prochlorococcus marinus (strain MIT 9515), this protein is Polyamine aminopropyltransferase.